The sequence spans 230 residues: Germin-like protein 5-1 (230 aa).

Positions 1–20 (MAMVGRSLLLLLLLVTLAAG) are cleaved as a signal peptide. A disulfide bridge connects residues Cys38 and Cys53. The region spanning 86 to 219 (YGFTARSVDI…TLLTDEATVD (134 aa)) is the Cupin type-1 domain. His119, His121, Glu126, and His167 together coordinate Mn(2+). Asn172 carries an N-linked (GlcNAc...) asparagine glycan.

The protein belongs to the germin family. In terms of assembly, oligomer (believed to be a pentamer but probably hexamer).

The protein resides in the secreted. The protein localises to the extracellular space. Its subcellular location is the apoplast. In terms of biological role, may play a role in plant defense. Probably has no oxalate oxidase activity even if the active site is conserved. This Oryza sativa subsp. japonica (Rice) protein is Germin-like protein 5-1.